The primary structure comprises 293 residues: Ribosomal protein L11 methyltransferase (293 aa).

S-adenosyl-L-methionine-binding residues include Thr146, Gly167, Asp189, and Asn230.

It belongs to the methyltransferase superfamily. PrmA family.

The protein resides in the cytoplasm. It carries out the reaction L-lysyl-[protein] + 3 S-adenosyl-L-methionine = N(6),N(6),N(6)-trimethyl-L-lysyl-[protein] + 3 S-adenosyl-L-homocysteine + 3 H(+). In terms of biological role, methylates ribosomal protein L11. This is Ribosomal protein L11 methyltransferase from Colwellia psychrerythraea (strain 34H / ATCC BAA-681) (Vibrio psychroerythus).